Consider the following 313-residue polypeptide: Uracil-DNA glycosylase (313 aa).

Over residues 1-12 (MIGQKTLYSFFS) the composition is skewed to polar residues. The tract at residues 1 to 25 (MIGQKTLYSFFSPSPARKRHAPSPE) is interaction with FAM72A. The mitochondrial localization signal stretch occupies residues 1-29 (MIGQKTLYSFFSPSPARKRHAPSPEPAVQ). Positions 1-68 (MIGQKTLYSF…GTPPSSPLSA (68 aa)) are disordered. Phosphoserine occurs at positions 12 and 14. Residues 17–19 (RKR) carry the Important for nuclear sorting motif. S23 is subject to Phosphoserine. Low complexity predominate over residues 43–53 (AAAIPAKKAPA). T60 is modified (phosphothreonine). S64 carries the phosphoserine modification. The segment at 73–88 (RIQRNKAAALLRLAAR) is interaction with RPA2. Q153 lines the uracil pocket. Catalysis depends on D154, which acts as the Proton acceptor. Position 157 (H157) interacts with dsDNA. F167 lines the uracil pocket. Position 178 (S178) interacts with dsDNA. Residue N213 participates in uracil binding. DsDNA is bound by residues S256, H277, S279, S282, and R285. H277 serves as a coordination point for uracil. K295 bears the N6-acetyllysine mark.

It belongs to the uracil-DNA glycosylase (UDG) superfamily. UNG family. As to quaternary structure, monomer. Interacts with RPA2 subunit of the RPA trimer; this interaction mediates UNG2 recruitment to RPA-coated single-stranded DNA at stalled replication forks. Interacts with PCNA; this interaction mediates UNG2 recruitment to S-phase replication foci. Interacts (via N-terminus) with FAM72A. In terms of assembly, (Microbial infection) Interacts with HIV-1 Vpr. Post-translationally, processed by mitochondrial serine or cysteine peptidases to yield a mature dominant form that lacks N-terminal 29 amino acid residues and another minor form that lacks N-terminal 77 amino acid residues. The catalytic activity of UNG1 delta29 is not product-inhibited by AP sites.

It is found in the mitochondrion. Its subcellular location is the nucleus. It carries out the reaction Hydrolyzes single-stranded DNA or mismatched double-stranded DNA and polynucleotides, releasing free uracil.. The enzyme catalyses a 2'-deoxyuridine in single-stranded DNA + H2O = a 2'-deoxyribose 5'-monophosphate in single-stranded DNA + uracil. The catalysed reaction is a 2'-deoxyuridine in double-stranded DNA + H2O = a 2'-deoxyribose 5'-monophosphate in double-stranded DNA + uracil. Its function is as follows. Uracil-DNA glycosylase that hydrolyzes the N-glycosidic bond between uracil and deoxyribose in single- and double-stranded DNA (ssDNA and dsDNA) to release a free uracil residue and form an abasic (apurinic/apyrimidinic; AP) site. Excises uracil residues arising as a result of misincorporation of dUMP residues by DNA polymerase during replication or due to spontaneous or enzymatic deamination of cytosine. Mediates error-free base excision repair (BER) of uracil at replication forks. According to the model, it is recruited by PCNA to S-phase replication forks to remove misincorporated uracil at U:A base mispairs in nascent DNA strands. Via trimeric RPA it is recruited to ssDNA stretches ahead of the polymerase to allow detection and excision of deaminated cytosines prior to replication. The resultant AP sites temporarily stall replication, allowing time to repair the lesion. Mediates mutagenic uracil processing involved in antibody affinity maturation. Processes AICDA-induced U:G base mispairs at variable immunoglobulin (Ig) regions leading to the generation of transversion mutations. Operates at switch sites of Ig constant regions where it mediates Ig isotype class switch recombination. Excises AICDA-induced uracil residues forming AP sites that are subsequently nicked by APEX1 endonuclease. The accumulation of staggered nicks in opposite strands results in double strand DNA breaks that are finally resolved via non-homologous end joining repair pathway. The chain is Uracil-DNA glycosylase from Homo sapiens (Human).